The chain runs to 734 residues: Photosystem I P700 chlorophyll a apoprotein A2 (734 aa).

The next 8 membrane-spanning stretches (helical) occupy residues 46 to 69 (IFAS…FHVA), 135 to 158 (LYTG…LHLQ), 175 to 199 (LNHH…HVAI), 273 to 291 (IAHH…GHMY), 330 to 353 (IHFQ…QHMY), 369 to 395 (AALY…IFFI), 417 to 439 (AIIS…LYVH), and 517 to 535 (FLVH…LILV). Cysteine 559 and cysteine 568 together coordinate [4Fe-4S] cluster. 2 helical membrane passes run 575–596 (AFYL…YWHW) and 643–665 (LSVW…MFLI). 3 residues coordinate chlorophyll a: histidine 654, methionine 662, and tyrosine 670. Tryptophan 671 is a binding site for phylloquinone. Residues 707-727 (LVGLAHFSVGYIFTYAAFLIA) traverse the membrane as a helical segment.

This sequence belongs to the PsaA/PsaB family. The PsaA/B heterodimer binds the P700 chlorophyll special pair and subsequent electron acceptors. PSI consists of a core antenna complex that captures photons, and an electron transfer chain that converts photonic excitation into a charge separation. The eukaryotic PSI reaction center is composed of at least 11 subunits. Requires P700 is a chlorophyll a/chlorophyll a' dimer, A0 is one or more chlorophyll a, A1 is one or both phylloquinones and FX is a shared 4Fe-4S iron-sulfur center. as cofactor.

The protein localises to the plastid. It is found in the chloroplast thylakoid membrane. The enzyme catalyses reduced [plastocyanin] + hnu + oxidized [2Fe-2S]-[ferredoxin] = oxidized [plastocyanin] + reduced [2Fe-2S]-[ferredoxin]. Functionally, psaA and PsaB bind P700, the primary electron donor of photosystem I (PSI), as well as the electron acceptors A0, A1 and FX. PSI is a plastocyanin-ferredoxin oxidoreductase, converting photonic excitation into a charge separation, which transfers an electron from the donor P700 chlorophyll pair to the spectroscopically characterized acceptors A0, A1, FX, FA and FB in turn. Oxidized P700 is reduced on the lumenal side of the thylakoid membrane by plastocyanin. This chain is Photosystem I P700 chlorophyll a apoprotein A2, found in Phaseolus vulgaris (Kidney bean).